The sequence spans 75 residues: Small ribosomal subunit protein bS18c (75 aa).

Belongs to the bacterial ribosomal protein bS18 family. In terms of assembly, part of the 30S ribosomal subunit.

The protein localises to the plastid. Its subcellular location is the chloroplast. The sequence is that of Small ribosomal subunit protein bS18c from Angiopteris evecta (Mule's foot fern).